Reading from the N-terminus, the 423-residue chain is Glutamate-1-semialdehyde 2,1-aminomutase (423 aa).

Position 262 is an N6-(pyridoxal phosphate)lysine (K262).

This sequence belongs to the class-III pyridoxal-phosphate-dependent aminotransferase family. HemL subfamily. Homodimer. It depends on pyridoxal 5'-phosphate as a cofactor.

It is found in the cytoplasm. The enzyme catalyses (S)-4-amino-5-oxopentanoate = 5-aminolevulinate. It functions in the pathway porphyrin-containing compound metabolism; protoporphyrin-IX biosynthesis; 5-aminolevulinate from L-glutamyl-tRNA(Glu): step 2/2. The sequence is that of Glutamate-1-semialdehyde 2,1-aminomutase from Campylobacter fetus subsp. fetus (strain 82-40).